The chain runs to 549 residues: Glucose-6-phosphate isomerase (549 aa).

The active-site Proton donor is the glutamate 355. Residues histidine 386 and lysine 514 contribute to the active site.

This sequence belongs to the GPI family.

The protein localises to the cytoplasm. It catalyses the reaction alpha-D-glucose 6-phosphate = beta-D-fructose 6-phosphate. It participates in carbohydrate biosynthesis; gluconeogenesis. It functions in the pathway carbohydrate degradation; glycolysis; D-glyceraldehyde 3-phosphate and glycerone phosphate from D-glucose: step 2/4. Functionally, catalyzes the reversible isomerization of glucose-6-phosphate to fructose-6-phosphate. The protein is Glucose-6-phosphate isomerase of Enterobacter sp. (strain 638).